The chain runs to 137 residues: Beta-synuclein (137 aa).

2 consecutive repeat copies span residues 20–30 (EKTKQGVTEAA) and 31–41 (EKTKEGVLYVG). The 4 X 11 AA tandem repeats of [EGS]-K-T-K-[EQ]-[GQ]-V-X(4) stretch occupies residues 20 to 67 (EKTKQGVTEAAEKTKEGVLYVGSKTKEGVVQGVASVAEKTKEQASHLG). A 3; approximate repeat occupies 42-56 (SKTKEGVVQGVASVA). The stretch at 57–67 (EKTKEQASHLG) is repeat 4. Basic and acidic residues predominate over residues 88 to 97 (EFPTDLKPEE). The segment at 88–137 (EFPTDLKPEEVAQEAAEEPLIEPLMEPEGESYEDSPQEEYQEYEPEAKGP) is disordered. Over residues 98–131 (VAQEAAEEPLIEPLMEPEGESYEDSPQEEYQEYE) the composition is skewed to acidic residues. S118 carries the phosphoserine; by BARK1, CK2 and GRK5 modification.

It belongs to the synuclein family. Phosphorylated. Phosphorylation by G-protein coupled receptor kinases (GRK) is more efficient than phosphorylation by CK1, CK2 and CaM-kinase II. Expressed specifically in brain.

Its subcellular location is the cytoplasm. Functionally, may be involved in neuronal plasticity. In Rattus norvegicus (Rat), this protein is Beta-synuclein (Sncb).